We begin with the raw amino-acid sequence, 342 residues long: MISSRQKLILKAIIDMYSEKGEPVGSKALMALPYLNYSSATLRYDMAVLEELGFLEKMHTSSGRVPSERGYRYYIEHLVTRDNDVTEVFPLIDEVFSKKALGREHTIKEALKLLTDLTSYTAVAVGPDILQSHIKRIEMVPLGLKDAVMLIVTDTGHVQHQQIHISDDMRMDDIKEVIHTLDDLLKNRTLEDALKVLKEEYAISELNQFMSYQSQIIDSFIEAFSKFASDSFYLSGMTNAFEQPEFNDVSHMKRFIDMMDRREIVKLIGTAEGISVRFGSDMEIKPLNQMTIISIPYQIDSKQKGTIALVGPSRMSYQKVIPLLEYIAANLAKLYKDNNKET.

This sequence belongs to the HrcA family.

Its function is as follows. Negative regulator of class I heat shock genes (grpE-dnaK-dnaJ and groELS operons). Prevents heat-shock induction of these operons. This Acholeplasma laidlawii protein is Heat-inducible transcription repressor HrcA.